The primary structure comprises 395 residues: Nucleoside diphosphate kinase homolog 7 (395 aa).

Residues 22 to 110 (QSERFAFIAE…YTARQLGSRK (89 aa)) enclose the DM10 domain.

This sequence belongs to the NDK family. In terms of assembly, component of sperm flagellar doublet microtubules. Component of the gamma-tubulin ring complex.

The protein resides in the cytoplasm. It localises to the cytoskeleton. Its subcellular location is the microtubule organizing center. It is found in the centrosome. The protein localises to the nucleus. The protein resides in the spindle. It localises to the cilium axoneme. Its subcellular location is the flagellum axoneme. It is found in the cell projection. The protein localises to the cilium. In terms of biological role, possesses an intrinsic kinase activity. Displays 3'-5' exonuclease activity with a preference for single-stranded DNA. Does not seem to have nucleoside diphosphate kinase activity. Functional component of the gamma-tubulin ring complex, implicated in the regulation of the microtubule-nucleating activity of the gamma-tubulin ring complex in centrosomes, in a kinase activity-dependent manner. Part of the dynein-decorated doublet microtubules (DMTs) in cilia axoneme, which is required for motile cilia beating. The sequence is that of Nucleoside diphosphate kinase homolog 7 from Mus musculus (Mouse).